Consider the following 89-residue polypeptide: Small ribosomal subunit protein bS18 (89 aa).

It belongs to the bacterial ribosomal protein bS18 family. In terms of assembly, part of the 30S ribosomal subunit. Forms a tight heterodimer with protein bS6.

Its function is as follows. Binds as a heterodimer with protein bS6 to the central domain of the 16S rRNA, where it helps stabilize the platform of the 30S subunit. The sequence is that of Small ribosomal subunit protein bS18 from Parabacteroides distasonis (strain ATCC 8503 / DSM 20701 / CIP 104284 / JCM 5825 / NCTC 11152).